The sequence spans 89 residues: Elongation factor 1-beta (89 aa).

Belongs to the EF-1-beta/EF-1-delta family.

Functionally, promotes the exchange of GDP for GTP in EF-1-alpha/GDP, thus allowing the regeneration of EF-1-alpha/GTP that could then be used to form the ternary complex EF-1-alpha/GTP/AAtRNA. In Methanococcus vannielii (strain ATCC 35089 / DSM 1224 / JCM 13029 / OCM 148 / SB), this protein is Elongation factor 1-beta.